Reading from the N-terminus, the 286-residue chain is Putative electron transfer flavoprotein subunit YgcQ (286 aa).

FAD is bound at residue 225 to 253; it reads VCIVVGASGAAALMAGVRNSKFVVAINHD.

This sequence belongs to the ETF alpha-subunit/FixB family. YgcQ and YgcR form a heterodimer.

Its function is as follows. May play a role in a redox process. This chain is Putative electron transfer flavoprotein subunit YgcQ (ygcQ), found in Escherichia coli (strain K12).